Reading from the N-terminus, the 284-residue chain is Bifunctional protein FolD (284 aa).

NADP(+) contacts are provided by residues 166-168 (GAS) and isoleucine 232.

The protein belongs to the tetrahydrofolate dehydrogenase/cyclohydrolase family. As to quaternary structure, homodimer.

It catalyses the reaction (6R)-5,10-methylene-5,6,7,8-tetrahydrofolate + NADP(+) = (6R)-5,10-methenyltetrahydrofolate + NADPH. It carries out the reaction (6R)-5,10-methenyltetrahydrofolate + H2O = (6R)-10-formyltetrahydrofolate + H(+). It functions in the pathway one-carbon metabolism; tetrahydrofolate interconversion. Functionally, catalyzes the oxidation of 5,10-methylenetetrahydrofolate to 5,10-methenyltetrahydrofolate and then the hydrolysis of 5,10-methenyltetrahydrofolate to 10-formyltetrahydrofolate. This chain is Bifunctional protein FolD, found in Pseudoalteromonas translucida (strain TAC 125).